Consider the following 486-residue polypeptide: Membrane-bound lytic murein transglycosylase F (486 aa).

The first 26 residues, Met-1–Ala-26, serve as a signal peptide directing secretion. Residues Cys-27 to Val-267 form a non-LT domain region. The tract at residues Asp-268–Leu-486 is LT domain. Residue Glu-314 is part of the active site. Residues Val-464–Leu-486 form a disordered region.

This sequence in the N-terminal section; belongs to the bacterial solute-binding protein 3 family. The protein in the C-terminal section; belongs to the transglycosylase Slt family.

The protein localises to the cell outer membrane. It carries out the reaction Exolytic cleavage of the (1-&gt;4)-beta-glycosidic linkage between N-acetylmuramic acid (MurNAc) and N-acetylglucosamine (GlcNAc) residues in peptidoglycan, from either the reducing or the non-reducing ends of the peptidoglycan chains, with concomitant formation of a 1,6-anhydrobond in the MurNAc residue.. Functionally, murein-degrading enzyme that degrades murein glycan strands and insoluble, high-molecular weight murein sacculi, with the concomitant formation of a 1,6-anhydromuramoyl product. Lytic transglycosylases (LTs) play an integral role in the metabolism of the peptidoglycan (PG) sacculus. Their lytic action creates space within the PG sacculus to allow for its expansion as well as for the insertion of various structures such as secretion systems and flagella. The protein is Membrane-bound lytic murein transglycosylase F of Pseudomonas fluorescens (strain ATCC BAA-477 / NRRL B-23932 / Pf-5).